The following is a 249-amino-acid chain: Flagellar L-ring protein (249 aa).

The N-terminal stretch at 1–25 is a signal peptide; that stretch reads MSRLRTSHALRTAAALVAVGCLASG. The N-palmitoyl cysteine moiety is linked to residue cysteine 26. Cysteine 26 is lipidated: S-diacylglycerol cysteine.

The protein belongs to the FlgH family. The basal body constitutes a major portion of the flagellar organelle and consists of four rings (L,P,S, and M) mounted on a central rod.

Its subcellular location is the cell outer membrane. The protein resides in the bacterial flagellum basal body. Functionally, assembles around the rod to form the L-ring and probably protects the motor/basal body from shearing forces during rotation. The polypeptide is Flagellar L-ring protein (Afipia carboxidovorans (strain ATCC 49405 / DSM 1227 / KCTC 32145 / OM5) (Oligotropha carboxidovorans)).